A 563-amino-acid chain; its full sequence is Arginine--tRNA ligase (563 aa).

Residues 120–130 carry the 'HIGH' region motif; it reads PNIAKPFHVGH.

Belongs to the class-I aminoacyl-tRNA synthetase family. In terms of assembly, monomer.

It is found in the cytoplasm. It catalyses the reaction tRNA(Arg) + L-arginine + ATP = L-arginyl-tRNA(Arg) + AMP + diphosphate. The protein is Arginine--tRNA ligase of Clostridium acetobutylicum (strain ATCC 824 / DSM 792 / JCM 1419 / IAM 19013 / LMG 5710 / NBRC 13948 / NRRL B-527 / VKM B-1787 / 2291 / W).